Consider the following 492-residue polypeptide: Ketol-acid reductoisomerase (NADP(+)) (492 aa).

The KARI N-terminal Rossmann domain occupies Ala-15 to Ser-208. NADP(+) is bound by residues Cys-45–Gln-48, Arg-68, Arg-76, Ser-78, and Asp-108–Gln-110. Residue His-132 is part of the active site. Gly-158 is a binding site for NADP(+). 2 consecutive KARI C-terminal knotted domains span residues Ser-209–Glu-344 and Tyr-345–Met-485. Mg(2+)-binding residues include Asp-217, Glu-221, Glu-389, and Glu-393. Residue Ser-414 coordinates substrate.

The protein belongs to the ketol-acid reductoisomerase family. It depends on Mg(2+) as a cofactor.

The enzyme catalyses (2R)-2,3-dihydroxy-3-methylbutanoate + NADP(+) = (2S)-2-acetolactate + NADPH + H(+). It carries out the reaction (2R,3R)-2,3-dihydroxy-3-methylpentanoate + NADP(+) = (S)-2-ethyl-2-hydroxy-3-oxobutanoate + NADPH + H(+). It participates in amino-acid biosynthesis; L-isoleucine biosynthesis; L-isoleucine from 2-oxobutanoate: step 2/4. Its pathway is amino-acid biosynthesis; L-valine biosynthesis; L-valine from pyruvate: step 2/4. Functionally, involved in the biosynthesis of branched-chain amino acids (BCAA). Catalyzes an alkyl-migration followed by a ketol-acid reduction of (S)-2-acetolactate (S2AL) to yield (R)-2,3-dihydroxy-isovalerate. In the isomerase reaction, S2AL is rearranged via a Mg-dependent methyl migration to produce 3-hydroxy-3-methyl-2-ketobutyrate (HMKB). In the reductase reaction, this 2-ketoacid undergoes a metal-dependent reduction by NADPH to yield (R)-2,3-dihydroxy-isovalerate. The protein is Ketol-acid reductoisomerase (NADP(+)) of Photorhabdus laumondii subsp. laumondii (strain DSM 15139 / CIP 105565 / TT01) (Photorhabdus luminescens subsp. laumondii).